The sequence spans 116 residues: S-adenosylmethionine decarboxylase proenzyme (116 aa).

The active-site Schiff-base intermediate with substrate; via pyruvic acid is Ser63. Ser63 bears the Pyruvic acid (Ser); by autocatalysis mark. His68 serves as the catalytic Proton acceptor; for processing activity. The active-site Proton donor; for catalytic activity is the Cys83.

The protein belongs to the prokaryotic AdoMetDC family. Type 1 subfamily. Heterotetramer of two alpha and two beta chains arranged as a dimer of alpha/beta heterodimers. It depends on pyruvate as a cofactor. In terms of processing, is synthesized initially as an inactive proenzyme. Formation of the active enzyme involves a self-maturation process in which the active site pyruvoyl group is generated from an internal serine residue via an autocatalytic post-translational modification. Two non-identical subunits are generated from the proenzyme in this reaction, and the pyruvate is formed at the N-terminus of the alpha chain, which is derived from the carboxyl end of the proenzyme. The post-translation cleavage follows an unusual pathway, termed non-hydrolytic serinolysis, in which the side chain hydroxyl group of the serine supplies its oxygen atom to form the C-terminus of the beta chain, while the remainder of the serine residue undergoes an oxidative deamination to produce ammonia and the pyruvoyl group blocking the N-terminus of the alpha chain.

It catalyses the reaction S-adenosyl-L-methionine + H(+) = S-adenosyl 3-(methylsulfanyl)propylamine + CO2. Its pathway is amine and polyamine biosynthesis; S-adenosylmethioninamine biosynthesis; S-adenosylmethioninamine from S-adenosyl-L-methionine: step 1/1. Functionally, catalyzes the decarboxylation of S-adenosylmethionine to S-adenosylmethioninamine (dcAdoMet), the propylamine donor required for the synthesis of the polyamines spermine and spermidine from the diamine putrescine. This chain is S-adenosylmethionine decarboxylase proenzyme, found in Clostridium botulinum (strain ATCC 19397 / Type A).